The chain runs to 25 residues: GWASKIGETLGKMAKVGLHELIQPK.

As to expression, expressed by the skin glands.

It localises to the secreted. Antimicrobial peptide. In Xenopus boumbaensis (Mawa clawed frog), this protein is Xenoposin precursor fragment BM2.